We begin with the raw amino-acid sequence, 553 residues long: Undecaprenyl phosphate-alpha-4-amino-4-deoxy-L-arabinose arabinosyl transferase (553 aa).

12 consecutive transmembrane segments (helical) span residues 8–28 (LVLL…RALW), 83–103 (VRFG…WLAF), 111–131 (VAVL…VGTY), 132–152 (AVLD…FWLG), 176–196 (VMTK…PWVI), 204–224 (VLLF…PWAL), 255–275 (APFW…VALL), 288–308 (IESG…FFSI), 317–337 (ILPC…QLVA), 350–370 (TVFG…WGIA), 380–400 (VLKV…GYLT), and 407–427 (LWQW…GMIP).

This sequence belongs to the glycosyltransferase 83 family.

It is found in the cell inner membrane. It catalyses the reaction 4-amino-4-deoxy-alpha-L-arabinopyranosyl di-trans,octa-cis-undecaprenyl phosphate + lipid IVA = lipid IIA + di-trans,octa-cis-undecaprenyl phosphate.. It participates in lipopolysaccharide metabolism; 4-amino-4-deoxy-beta-L-arabinose-lipid A biosynthesis. In terms of biological role, catalyzes the transfer of the L-Ara4N moiety of the glycolipid undecaprenyl phosphate-alpha-L-Ara4N to lipid A. The modified arabinose is attached to lipid A and is required for resistance to polymyxin and cationic antimicrobial peptides. This chain is Undecaprenyl phosphate-alpha-4-amino-4-deoxy-L-arabinose arabinosyl transferase, found in Enterobacter sp. (strain 638).